Consider the following 351-residue polypeptide: Prohormone-2 (351 aa).

A signal peptide spans 1-21; sequence MMCDWVWLLLTLCSLLMIVQS. Propeptides lie at residues 22–177 and 192–319; these read LPTN…QTQV and ELDI…MISR. Polar residues predominate over residues 51 to 69; sequence GNQQNHQPENNPSSSYSST. 2 disordered regions span residues 51 to 71 and 136 to 176; these read GNQQ…STAE and NEDR…VQTQ. Residues 136–145 are compositionally biased toward basic and acidic residues; sequence NEDRRKRSEK. Over residues 158–176 the composition is skewed to low complexity; that stretch reads PSTTSFQSPTSTQQSVQTQ.

It localises to the secreted. This Apis mellifera (Honeybee) protein is Prohormone-2.